The primary structure comprises 446 residues: N-succinylarginine dihydrolase (446 aa).

Residues Ser-19–Ser-28, Asn-110, and His-137–Arg-138 each bind substrate. Glu-174 is an active-site residue. Residue Arg-214 coordinates substrate. His-250 is an active-site residue. Substrate contacts are provided by Asp-252 and Asn-363. Cys-369 acts as the Nucleophile in catalysis.

It belongs to the succinylarginine dihydrolase family. In terms of assembly, homodimer.

It catalyses the reaction N(2)-succinyl-L-arginine + 2 H2O + 2 H(+) = N(2)-succinyl-L-ornithine + 2 NH4(+) + CO2. The protein operates within amino-acid degradation; L-arginine degradation via AST pathway; L-glutamate and succinate from L-arginine: step 2/5. Catalyzes the hydrolysis of N(2)-succinylarginine into N(2)-succinylornithine, ammonia and CO(2). This is N-succinylarginine dihydrolase from Hahella chejuensis (strain KCTC 2396).